A 377-amino-acid polypeptide reads, in one-letter code: Chaperone protein DnaJ (377 aa).

The 66-residue stretch at 4-69 (DYYEALGVTR…QKRAAYDRFG (66 aa)) folds into the J domain. Residues 135–213 (GKTAQIRVPT…CHGQGRVTQE (79 aa)) form a CR-type zinc finger. 8 residues coordinate Zn(2+): Cys148, Cys151, Cys165, Cys168, Cys187, Cys190, Cys201, and Cys204. CXXCXGXG motif repeat units lie at residues 148 to 155 (CDECSGSG), 165 to 172 (CTMCSGSG), 187 to 194 (CPGCNGRG), and 201 to 208 (CEKCHGQG).

It belongs to the DnaJ family. As to quaternary structure, homodimer. Zn(2+) is required as a cofactor.

The protein localises to the cytoplasm. Participates actively in the response to hyperosmotic and heat shock by preventing the aggregation of stress-denatured proteins and by disaggregating proteins, also in an autonomous, DnaK-independent fashion. Unfolded proteins bind initially to DnaJ; upon interaction with the DnaJ-bound protein, DnaK hydrolyzes its bound ATP, resulting in the formation of a stable complex. GrpE releases ADP from DnaK; ATP binding to DnaK triggers the release of the substrate protein, thus completing the reaction cycle. Several rounds of ATP-dependent interactions between DnaJ, DnaK and GrpE are required for fully efficient folding. Also involved, together with DnaK and GrpE, in the DNA replication of plasmids through activation of initiation proteins. The protein is Chaperone protein DnaJ of Brucella abortus (strain S19).